The primary structure comprises 710 residues: Cyclin-dependent kinase G-2 (710 aa).

Residues 1–350 (MAAGRHGGYR…ETPEPVKPPH (350 aa)) form a disordered region. The segment covering 8 to 30 (GYRDYEARERELDAEASRRSKEQ) has biased composition (basic and acidic residues). Positions 31–40 (QHHHHPSGRH) are enriched in basic residues. Residues 41-64 (QRGDSDPRCEADRRRDGGRSRGGR) are compositionally biased toward basic and acidic residues. Residues 124-133 (SVVAASASSP) show a composition bias toward low complexity. Over residues 144–163 (WDRDSPKPMHSDVAKGKKAV) the composition is skewed to basic and acidic residues. A compositionally biased stretch (pro residues) spans 170–182 (LPLPPPPPLPPQD). 2 stretches are compositionally biased toward basic and acidic residues: residues 183-195 (HIPE…KSPM) and 209-218 (LQEHAESRVM). Acidic residues predominate over residues 299-308 (DENEDLEVDK). Residues 335–344 (YEVRRSETPE) show a composition bias toward basic and acidic residues. Residues 365-656 (FERLNKINEG…ADAALQHEWF (292 aa)) enclose the Protein kinase domain. Residues 371–379 (INEGTYGVV) and K394 each bind ATP. At T375 the chain carries Phosphothreonine. Residue Y376 is modified to Phosphotyrosine. The active-site Proton acceptor is D489. The residue at position 516 (S516) is a Phosphoserine. At T522 the chain carries Phosphothreonine.

Belongs to the protein kinase superfamily. CMGC Ser/Thr protein kinase family. CDC2/CDKX subfamily.

The catalysed reaction is L-seryl-[protein] + ATP = O-phospho-L-seryl-[protein] + ADP + H(+). It carries out the reaction L-threonyl-[protein] + ATP = O-phospho-L-threonyl-[protein] + ADP + H(+). It catalyses the reaction [DNA-directed RNA polymerase] + ATP = phospho-[DNA-directed RNA polymerase] + ADP + H(+). This chain is Cyclin-dependent kinase G-2 (CDKG-2), found in Oryza sativa subsp. indica (Rice).